Reading from the N-terminus, the 594-residue chain is Glutamate decarboxylase 1 (594 aa).

The segment covering 1 to 13 has biased composition (low complexity); the sequence is MASSTPSSSATSS. Residues 1–23 form a disordered region; the sequence is MASSTPSSSATSSNAGADPNTTN. S78 is modified (phosphoserine). A 4-aminobutanoate-binding site is contributed by 190–192; that stretch reads QLS. The residue at position 405 (K405) is an N6-(pyridoxal phosphate)lysine. R567 is a 4-aminobutanoate binding site.

The protein belongs to the group II decarboxylase family. Homodimer. It depends on pyridoxal 5'-phosphate as a cofactor.

The catalysed reaction is L-glutamate + H(+) = 4-aminobutanoate + CO2. Functionally, catalyzes the synthesis of the inhibitory neurotransmitter gamma-aminobutyric acid (GABA) with pyridoxal 5'-phosphate as cofactor. The chain is Glutamate decarboxylase 1 (GAD1) from Felis catus (Cat).